We begin with the raw amino-acid sequence, 234 residues long: LexA repressor (234 aa).

The segment at residues 26–46 (FDEMKDALDLRSKSGIHRLIT) is a DNA-binding region (H-T-H motif). The disordered stretch occupies residues 80-107 (RGFTPSVIEGNLGKVRPPSPQHAEDDSD). Catalysis depends on for autocatalytic cleavage activity residues Ser-155 and Lys-193.

It belongs to the peptidase S24 family. As to quaternary structure, homodimer.

It carries out the reaction Hydrolysis of Ala-|-Gly bond in repressor LexA.. In terms of biological role, represses a number of genes involved in the response to DNA damage (SOS response), including recA and lexA. In the presence of single-stranded DNA, RecA interacts with LexA causing an autocatalytic cleavage which disrupts the DNA-binding part of LexA, leading to derepression of the SOS regulon and eventually DNA repair. This chain is LexA repressor, found in Rhodopseudomonas palustris (strain HaA2).